The chain runs to 137 residues: Large ribosomal subunit protein uL13 (137 aa).

Belongs to the universal ribosomal protein uL13 family. As to quaternary structure, part of the 50S ribosomal subunit.

Functionally, this protein is one of the early assembly proteins of the 50S ribosomal subunit, although it is not seen to bind rRNA by itself. It is important during the early stages of 50S assembly. The sequence is that of Large ribosomal subunit protein uL13 from Methanocaldococcus jannaschii (strain ATCC 43067 / DSM 2661 / JAL-1 / JCM 10045 / NBRC 100440) (Methanococcus jannaschii).